Here is a 284-residue protein sequence, read N- to C-terminus: 2-dehydro-3-deoxyphosphooctonate aldolase (284 aa).

The protein belongs to the KdsA family.

It localises to the cytoplasm. The enzyme catalyses D-arabinose 5-phosphate + phosphoenolpyruvate + H2O = 3-deoxy-alpha-D-manno-2-octulosonate-8-phosphate + phosphate. It participates in carbohydrate biosynthesis; 3-deoxy-D-manno-octulosonate biosynthesis; 3-deoxy-D-manno-octulosonate from D-ribulose 5-phosphate: step 2/3. It functions in the pathway bacterial outer membrane biogenesis; lipopolysaccharide biosynthesis. This is 2-dehydro-3-deoxyphosphooctonate aldolase from Photorhabdus laumondii subsp. laumondii (strain DSM 15139 / CIP 105565 / TT01) (Photorhabdus luminescens subsp. laumondii).